A 614-amino-acid chain; its full sequence is Pyruvate decarboxylase 2 (614 aa).

Residues aspartate 50 and histidine 137 each coordinate substrate. Residues aspartate 415–isoleucine 523 are thiamine pyrophosphate binding. Residues aspartate 491, asparagine 518, and glycine 520 each contribute to the Mg(2+) site. Residue glutamate 524 participates in substrate binding.

It belongs to the TPP enzyme family. As to quaternary structure, homotetramer. Requires a metal cation as cofactor. Thiamine diphosphate is required as a cofactor. As to expression, pollen.

The catalysed reaction is a 2-oxocarboxylate + H(+) = an aldehyde + CO2. This is Pyruvate decarboxylase 2 (PDC2) from Nicotiana tabacum (Common tobacco).